The primary structure comprises 381 residues: Chaperone protein DnaJ (381 aa).

A J domain is found at 5-70; it reads DYYEVLGIER…EKRSAYDQFG (66 aa). Residues 137 to 215 form a CR-type zinc finger; sequence GTTVDIRVPR…CHGEGRVRET (79 aa). Zn(2+) is bound by residues C150, C153, C167, C170, C189, C192, C203, and C206. 4 CXXCXGXG motif repeats span residues 150–157, 167–174, 189–196, and 203–210; these read CEHCDGDG, CPTCHGQG, CPTCHGAG, and CRKCHGEG.

The protein belongs to the DnaJ family. Homodimer. It depends on Zn(2+) as a cofactor.

Its subcellular location is the cytoplasm. In terms of biological role, participates actively in the response to hyperosmotic and heat shock by preventing the aggregation of stress-denatured proteins and by disaggregating proteins, also in an autonomous, DnaK-independent fashion. Unfolded proteins bind initially to DnaJ; upon interaction with the DnaJ-bound protein, DnaK hydrolyzes its bound ATP, resulting in the formation of a stable complex. GrpE releases ADP from DnaK; ATP binding to DnaK triggers the release of the substrate protein, thus completing the reaction cycle. Several rounds of ATP-dependent interactions between DnaJ, DnaK and GrpE are required for fully efficient folding. Also involved, together with DnaK and GrpE, in the DNA replication of plasmids through activation of initiation proteins. The sequence is that of Chaperone protein DnaJ from Chromohalobacter salexigens (strain ATCC BAA-138 / DSM 3043 / CIP 106854 / NCIMB 13768 / 1H11).